A 223-amino-acid polypeptide reads, in one-letter code: UPF0441 protein YgiB (223 aa).

The segment covering 178–195 (TVPKTAMAPKPATTTTVT) has biased composition (low complexity). The tract at residues 178 to 223 (TVPKTAMAPKPATTTTVTRGGFGESVAKQSTMQRSAAGTSTRSMGG) is disordered. The segment covering 204-223 (AKQSTMQRSAAGTSTRSMGG) has biased composition (polar residues).

Belongs to the UPF0441 family.

This chain is UPF0441 protein YgiB, found in Salmonella enteritidis PT4 (strain P125109).